A 426-amino-acid polypeptide reads, in one-letter code: Enolase (426 aa).

Residue Q163 participates in (2R)-2-phosphoglycerate binding. The active-site Proton donor is E205. Mg(2+) is bound by residues D242, E285, and D312. Residues K337, R366, S367, and K388 each contribute to the (2R)-2-phosphoglycerate site. K337 (proton acceptor) is an active-site residue.

This sequence belongs to the enolase family. The cofactor is Mg(2+).

The protein localises to the cytoplasm. It localises to the secreted. The protein resides in the cell surface. It catalyses the reaction (2R)-2-phosphoglycerate = phosphoenolpyruvate + H2O. It participates in carbohydrate degradation; glycolysis; pyruvate from D-glyceraldehyde 3-phosphate: step 4/5. Catalyzes the reversible conversion of 2-phosphoglycerate (2-PG) into phosphoenolpyruvate (PEP). It is essential for the degradation of carbohydrates via glycolysis. The protein is Enolase of Nitrobacter winogradskyi (strain ATCC 25391 / DSM 10237 / CIP 104748 / NCIMB 11846 / Nb-255).